A 459-amino-acid polypeptide reads, in one-letter code: Exodeoxyribonuclease 7 large subunit (459 aa).

The protein belongs to the XseA family. As to quaternary structure, heterooligomer composed of large and small subunits.

The protein resides in the cytoplasm. It carries out the reaction Exonucleolytic cleavage in either 5'- to 3'- or 3'- to 5'-direction to yield nucleoside 5'-phosphates.. In terms of biological role, bidirectionally degrades single-stranded DNA into large acid-insoluble oligonucleotides, which are then degraded further into small acid-soluble oligonucleotides. In Pseudomonas fluorescens (strain Pf0-1), this protein is Exodeoxyribonuclease 7 large subunit.